Consider the following 548-residue polypeptide: SH2/SH3 adapter protein dreadlocks (548 aa).

Disordered stretches follow at residues 12 to 37, 57 to 92, and 113 to 146; these read IPDS…QHQN, QVPV…TASS, and GSGS…MKHG. Over residues 20–37 the composition is skewed to low complexity; sequence QQYPQQQQHPPQLPQHQN. The span at 113–122 shows a compositional bias: gly residues; that stretch reads GSGSANGSGS. Positions 123–135 are enriched in low complexity; that stretch reads GNSSSGSAAGNAG. The SH3 1 domain occupies 150 to 209; that stretch reads DDVCYVVAKYDYAAQGAQELDLRKNERYLLLDDSKHWWRVQNSRNQSGYVPSNYVKKEKP. The segment at 219–247 is disordered; sequence VKKGSGSKTLPNCSPSRQVESPTMSRRLP. Positions 227–242 are enriched in polar residues; the sequence is TLPNCSPSRQVESPTM. 2 consecutive SH3 domains span residues 252–311 and 324–386; these read EAIG…EDCD and NVLD…ELND. The interval 398 to 442 is disordered; the sequence is SAGNGNGGGSNGGAGGGGGNDSMERRNEGNKPAAQSSGQPIERPN. A compositionally biased stretch (gly residues) spans 401–417; sequence NGNGGGSNGGAGGGGGN. The 95-residue stretch at 448–542 folds into the SH2 domain; the sequence is WYYGAITRSQ…GEKLYLVRSL (95 aa).

Interacts (via SH2 and SH3 domains) with Dscam1 (via cytoplasmic domain); the interaction is direct and requires Dscam1 to be phosphorylated. Interacts (via SH2 and SH3 domains) with InR/Insulin-like receptor (via C-terminal cytoplasmic region); the interaction requires InR kinase activity, probably for autophosphorylation stimulated by insulin signaling. Interacts with Ptp61F (via C-terminus); this interaction is independent of insulin stimulation. Interacts (via SH3 domain 2) with Pak (via N-terminal PXXP motif). Phosphorylated by Src42A and possibly by other tyrosine kinases. Constitutively dephosphorylated by its binding partner Ptp61F.

The protein localises to the perikaryon. The protein resides in the cell projection. It is found in the axon. Its subcellular location is the growth cone. Its function is as follows. Adapter protein that links cell surface receptor tyrosine phosphorylation to downstream signaling pathways and effectors, many of which are involved in regulation of the actin cytoskeleton. Recruited by Dscam1/Down syndrome cell adhesion molecule homolog and InR/insulin-like receptor. Recruits Pak to membranes, probably when dock/dreadlocks is associated with activated receptors. Required for guidance and targeting of photoreceptor (R cell) axon projections but not for axon outgrowth, differentiation or target induction in the developing eye. As part of a signaling pathway that involves the lbm/late bloomer protein, involved in synapse formation of the RP3 motorneuron at the muscle 7/6 cleft, probably by stimulating axon defasciculation from other SNb neurons. In Drosophila melanogaster (Fruit fly), this protein is SH2/SH3 adapter protein dreadlocks.